Reading from the N-terminus, the 120-residue chain is Ribosome-binding factor A (120 aa).

The protein belongs to the RbfA family. In terms of assembly, monomer. Binds 30S ribosomal subunits, but not 50S ribosomal subunits or 70S ribosomes.

It is found in the cytoplasm. One of several proteins that assist in the late maturation steps of the functional core of the 30S ribosomal subunit. Associates with free 30S ribosomal subunits (but not with 30S subunits that are part of 70S ribosomes or polysomes). Required for efficient processing of 16S rRNA. May interact with the 5'-terminal helix region of 16S rRNA. The protein is Ribosome-binding factor A of Rickettsia africae (strain ESF-5).